Here is a 251-residue protein sequence, read N- to C-terminus: Protein phosphatase 1 regulatory subunit 35 (251 aa).

Disordered regions lie at residues 58–99 (LITV…QQTH) and 180–235 (PALA…VPRP). Residues 76-99 (PNKDEHGVETDREQSRECDGQQTH) show a composition bias toward basic and acidic residues.

Belongs to the PPP1R35 family.

Its subcellular location is the cytoplasm. The protein localises to the cytoskeleton. It is found in the microtubule organizing center. The protein resides in the centrosome. It localises to the centriole. Its function is as follows. During centriole duplication, may play a role in the centriole elongation by promoting the recruitment of the microtubule-binding elongation machinery, leading to the centriole to centrosome conversion. In addition may play a role in the primary cilia assembly. The polypeptide is Protein phosphatase 1 regulatory subunit 35 (Danio rerio (Zebrafish)).